Here is a 295-residue protein sequence, read N- to C-terminus: Trehalose/maltose transport system permease protein MalF (295 aa).

7 helical membrane-spanning segments follow: residues 16-36 (LGYLMILPLLTVVLVFIILPV), 79-99 (VSFSFVSVSLETILGLSFALI), 112-132 (AIVLIPWAVPTIISARTWELM), 146-166 (ILGVSPVNWLGTPISAFFAIV), 210-230 (ITLPLLKPVLIVALILRTIDA), 236-256 (IIYVLTGGGPGGATTSISLLA), and 267-287 (IGSAISILTFVLVLSFTIVYL). Positions 75 to 286 (TFVTVSFSFV…VLVLSFTIVY (212 aa)) constitute an ABC transmembrane type-1 domain.

The protein belongs to the binding-protein-dependent transport system permease family. The complex is composed of two ATP-binding proteins (MalK), two transmembrane proteins (MalG and MalF) and a solute-binding protein (MalE).

It localises to the cell membrane. Its function is as follows. Part of the ABC transporter complex MalEFGK involved in trehalose/maltose import. Responsible for the translocation of the substrate across the membrane. The protein is Trehalose/maltose transport system permease protein MalF (malF) of Thermococcus litoralis (strain ATCC 51850 / DSM 5473 / JCM 8560 / NS-C).